Consider the following 245-residue polypeptide: MASTQVLAGFHAVVARLRHAPESIKEIYVEASRRDKRMQTFLEQAERAGRRVHPVAAERLDGLARGTRHQGVVAVAEERSLAVGIDEVLDVIEGPALLLILDGVTDPHNLGACLRTADAAGVHAVIAPRDRAVGLNATVQRVACGAADTVPYLTVTNLARTMRELKERDVWLVGTDDQAGESMHQVDARRSMAWVMGAEGEGMRRLTRETCDQLVRIPMLGSVESLNVSVASAVCLYESVRQRQG.

S-adenosyl-L-methionine-binding residues include glycine 197, isoleucine 217, and leucine 226.

Belongs to the class IV-like SAM-binding methyltransferase superfamily. RNA methyltransferase TrmH family. RlmB subfamily.

It is found in the cytoplasm. It catalyses the reaction guanosine(2251) in 23S rRNA + S-adenosyl-L-methionine = 2'-O-methylguanosine(2251) in 23S rRNA + S-adenosyl-L-homocysteine + H(+). Functionally, specifically methylates the ribose of guanosine 2251 in 23S rRNA. The chain is 23S rRNA (guanosine-2'-O-)-methyltransferase RlmB from Bordetella parapertussis (strain 12822 / ATCC BAA-587 / NCTC 13253).